The chain runs to 363 residues: Peptide chain release factor 1 (363 aa).

Residue Gln-237 is modified to N5-methylglutamine. The tract at residues 281–302 is disordered; that stretch reads QQAEDEKSHAEEQTIRRSLVAS. Over residues 282–295 the composition is skewed to basic and acidic residues; it reads QAEDEKSHAEEQTI.

It belongs to the prokaryotic/mitochondrial release factor family. Methylated by PrmC. Methylation increases the termination efficiency of RF1.

The protein resides in the cytoplasm. Its function is as follows. Peptide chain release factor 1 directs the termination of translation in response to the peptide chain termination codons UAG and UAA. The protein is Peptide chain release factor 1 of Psychromonas ingrahamii (strain DSM 17664 / CCUG 51855 / 37).